The following is a 581-amino-acid chain: Arginine--tRNA ligase (581 aa).

Residues 126 to 136 (PNLAKEMHVGH) carry the 'HIGH' region motif.

It belongs to the class-I aminoacyl-tRNA synthetase family. In terms of assembly, monomer.

Its subcellular location is the cytoplasm. It carries out the reaction tRNA(Arg) + L-arginine + ATP = L-arginyl-tRNA(Arg) + AMP + diphosphate. The polypeptide is Arginine--tRNA ligase (Shewanella denitrificans (strain OS217 / ATCC BAA-1090 / DSM 15013)).